We begin with the raw amino-acid sequence, 118 residues long: Large ribosomal subunit protein uL18 (118 aa).

The disordered stretch occupies residues 1-25 (MISKPDKNKIRQKRHRRVRGKLSGT). Over residues 10–20 (IRQKRHRRVRG) the composition is skewed to basic residues.

Belongs to the universal ribosomal protein uL18 family. As to quaternary structure, part of the 50S ribosomal subunit; part of the 5S rRNA/L5/L18/L25 subcomplex. Contacts the 5S and 23S rRNAs.

Its function is as follows. This is one of the proteins that bind and probably mediate the attachment of the 5S RNA into the large ribosomal subunit, where it forms part of the central protuberance. The protein is Large ribosomal subunit protein uL18 of Streptococcus pyogenes serotype M5 (strain Manfredo).